The chain runs to 450 residues: Tubulin alpha-3 chain (450 aa).

Q11 is a binding site for GTP. At K40 the chain carries N6-acetyllysine. GTP contacts are provided by E71, S140, G144, T145, T179, N206, and N228. E71 lines the Mg(2+) pocket. E254 is an active-site residue.

Belongs to the tubulin family. In terms of assembly, dimer of alpha and beta chains. A typical microtubule is a hollow water-filled tube with an outer diameter of 25 nm and an inner diameter of 15 nM. Alpha-beta heterodimers associate head-to-tail to form protofilaments running lengthwise along the microtubule wall with the beta-tubulin subunit facing the microtubule plus end conferring a structural polarity. Microtubules usually have 13 protofilaments but different protofilament numbers can be found in some organisms and specialized cells. Requires Mg(2+) as cofactor. Post-translationally, undergoes a tyrosination/detyrosination cycle, the cyclic removal and re-addition of a C-terminal tyrosine residue by the enzymes tubulin tyrosine carboxypeptidase (TTCP) and tubulin tyrosine ligase (TTL), respectively. Acetylation of alpha chains at Lys-40 stabilizes microtubules and affects affinity and processivity of microtubule motors. This modification has a role in multiple cellular functions, ranging from cell motility, cell cycle progression or cell differentiation to intracellular trafficking and signaling. During the early stages of oogenesis lky/Alpha-tubulin N-acetyltransferase 2 is the main acetyltransferase responsible for Lys-40 acetylation in germline cells while Atat/alpha-tubulin N-acetyltransferase 1 is the main acetyltransferase responsible for Lys-40 acetylation in somatic cells.

The protein resides in the cytoplasm. Its subcellular location is the cytoskeleton. The enzyme catalyses GTP + H2O = GDP + phosphate + H(+). Functionally, tubulin is the major constituent of microtubules, a cylinder consisting of laterally associated linear protofilaments composed of alpha- and beta-tubulin heterodimers. Microtubules grow by the addition of GTP-tubulin dimers to the microtubule end, where a stabilizing cap forms. Below the cap, tubulin dimers are in GDP-bound state, owing to GTPase activity of alpha-tubulin. This chain is Tubulin alpha-3 chain (alphaTub84D), found in Drosophila melanogaster (Fruit fly).